Reading from the N-terminus, the 497-residue chain is Proline--tRNA ligase (497 aa).

Belongs to the class-II aminoacyl-tRNA synthetase family. ProS type 3 subfamily. In terms of assembly, homodimer.

It is found in the cytoplasm. The enzyme catalyses tRNA(Pro) + L-proline + ATP = L-prolyl-tRNA(Pro) + AMP + diphosphate. Functionally, catalyzes the attachment of proline to tRNA(Pro) in a two-step reaction: proline is first activated by ATP to form Pro-AMP and then transferred to the acceptor end of tRNA(Pro). The protein is Proline--tRNA ligase of Bacteroides fragilis (strain ATCC 25285 / DSM 2151 / CCUG 4856 / JCM 11019 / LMG 10263 / NCTC 9343 / Onslow / VPI 2553 / EN-2).